An 828-amino-acid chain; its full sequence is Neurotrophin receptor-interacting factor 1 (828 aa).

One can recognise a KRAB 1 domain in the interval 14 to 85; the sequence is VKFEDVSLTF…QREIPQDTLP (72 aa). Residue Lys-15 forms a Glycyl lysine isopeptide (Lys-Gly) (interchain with G-Cter in ubiquitin) linkage. The region spanning 158–240 is the SCAN box domain; it reads RQKFRHFQYE…ALLENMTSVS (83 aa). Positions 280–370 constitute a KRAB 2 domain; it reads VTFQDVAVDF…ESILEDGVKE (91 aa). Disordered stretches follow at residues 328–355, 377–490, and 575–611; these read RELT…RNGT, NQVG…DPIT, and QKGY…LSTS. Positions 345 to 355 are enriched in polar residues; that stretch reads PNTNDLSRNGT. Basic and acidic residues predominate over residues 384-394; the sequence is EKGHPQKKFSE. The span at 418-433 shows a compositional bias: basic residues; that stretch reads KYVKVKQKGTGKRKGR. The segment covering 458 to 478 has biased composition (polar residues); sequence RSGSTPVTHGSSIKKQQQGSE. Residues 589–599 show a composition bias toward basic residues; that stretch reads SWKHIKPHQKG. Residues 600-611 are compositionally biased toward basic and acidic residues; it reads SKGERVEELSTS. 5 consecutive C2H2-type zinc fingers follow at residues 684–706, 712–734, 740–762, 768–790, and 796–818; these read CRCS…KKIH, YMCM…LRIH, FECS…LRTH, YHCE…ERTH, and YVCI…QKTH.

This sequence belongs to the krueppel C2H2-type zinc-finger protein family. As to quaternary structure, interacts with NGFR/p75(NTR). Interacts (via KRAB 1 domain) with TRAF6. Interacts (when ubiquitinated at Lys-15) with SQSTM1/p62. In terms of processing, ubiquitinated by TRAF6 at Lys-15 through 'Lys-63'-linked polyubiquitination. 'Lys-63'-linked polyubiquitination occurs in response to NGFR/p75(NTR) cleavage by gamma-secretase and promotes binding with the ICD cleavage product of NGFR/p75(NTR), followed by translocation into the nucleus and subsequent apoptosis. Ubiquitously expressed at low level. Expressed at higher level in testis.

The protein localises to the cytoplasm. It localises to the nucleus. Functionally, transcription regulator involved in NGFR/p75(NTR)-mediated apoptosis. Essential component of the NGFR/p75(NTR) apoptotic pathway: upon ligand-binding and subsequent cleavage of NGFR/p75(NTR), binds to the intracellular domain (ICD) cleavage product of NGFR/p75(NTR), translocates to the nucleus and induces apoptosis, possibly by regulating expression of key regulators of apoptosis. Induces NGFR/p75(NTR)-mediated apoptosis in retina and sympathetic neurons. May also regulate expression of neuronal cholesterol biosynthesis genes. Probably acts as a transcription repressor: specifically binds to the 3'-end of zinc-finger coding genes and recruiting chromatin-modifying proteins such as SETDB1 and TRIM28/KAP1, leading to transcription repression. In Mus musculus (Mouse), this protein is Neurotrophin receptor-interacting factor 1 (Nrif1).